The following is a 345-amino-acid chain: Transmembrane protein 144 homolog (345 aa).

Helical transmembrane passes span 3 to 23 (IAVGLSACALSSVLFGSMFVP), 32 to 52 (GIFVQWIMSTAILLVGIVVYS), 61 to 81 (PLAMLGGMFWALGNATAVPIM), 84 to 104 (IGIGMGMLVWGTTNCVAGWAA), 120 to 140 (PFLNYFGLVLVVFGGFLFSQI), 193 to 213 (LAIITSLVAGVFYGFTFVPVI), 233 to 253 (VFSHYIGIFCTASALMIGYVI), 265 to 285 (LVGPSMTAGSMWGIAQASWFV), 293 to 313 (AVSFPIISMVPGVIAALWSVF), and 324 to 344 (LRLLSIAVAITLIGAICVGVS).

It belongs to the TMEM144 family.

It localises to the membrane. The protein is Transmembrane protein 144 homolog of Caenorhabditis elegans.